The chain runs to 508 residues: Prenylcysteine oxidase 1 (508 aa).

A signal peptide spans 1 to 31 (MDPAAPGLACSILRLGLGLLLLCSWWYPGSA). N-linked (GlcNAc...) asparagine glycans are attached at residues N199, N291, and N356.

It belongs to the prenylcysteine oxidase family. The cofactor is FAD.

The protein resides in the lysosome. It carries out the reaction an S-polyprenyl-L-cysteine + O2 + H2O = a polyprenal + L-cysteine + H2O2. It catalyses the reaction S-(2E,6E)-farnesyl-L-cysteine + O2 + H2O = (2E,6E)-farnesal + L-cysteine + H2O2. The enzyme catalyses [(2E,6E,10E)-geranylgeranyl]-L-cysteine + O2 + H2O = (2E,6E,10E)-geranylgeranial + L-cysteine + H2O2. In terms of biological role, prenylcysteine oxidase that cleaves the thioether bond of prenyl-L-cysteines, such as farnesylcysteine and geranylgeranylcysteine. Only active against free prenylcysteines and not prenylcysteine residues within prenylated proteins or peptides. Involved in the final step in the degradation of prenylated proteins, by degrading prenylcysteines after the protein has been degraded. In Bos taurus (Bovine), this protein is Prenylcysteine oxidase 1.